The primary structure comprises 437 residues: UDP-sugar transporter protein SLC35A5 (437 aa).

The Cytoplasmic segment spans residues M1–R21. Residues P22–S42 form a helical membrane-spanning segment. At S43–T65 the chain is on the lumenal side. The helical transmembrane segment at V66–I86 threads the bilayer. The Cytoplasmic portion of the chain corresponds to K87–S106. A helical membrane pass occupies residues F107–S129. Residues Y130–Q132 lie on the Lumenal side of the membrane. A helical transmembrane segment spans residues P133–L155. Residues K156–H158 lie on the Cytoplasmic side of the membrane. Residues L159–A179 form a helical membrane-spanning segment. The Lumenal segment spans residues S180–R241. N217 is a glycosylation site (N-linked (GlcNAc...) asparagine). Residues L242 to Y262 form a helical membrane-spanning segment. The Cytoplasmic segment spans residues N263–S276. The helical transmembrane segment at I277 to V297 threads the bilayer. Topologically, residues L298 to N316 are lumenal. A helical membrane pass occupies residues A317–L337. Residues K338 to M343 lie on the Cytoplasmic side of the membrane. A helical transmembrane segment spans residues F344–F364. Over D365 to R367 the chain is Lumenal. The chain crosses the membrane as a helical span at residues P368–A388. The Cytoplasmic segment spans residues S389–L437. Phosphoserine is present on residues S407, S429, and S432. Residues E412 to L437 form a disordered region. Positions L421–D430 are enriched in basic and acidic residues.

It belongs to the nucleotide-sugar transporter family. SLC35A subfamily. In terms of assembly, probably forms homooligomers and heterooligomers with SLC35A1, SLC35A2, SLC35A3 and SLC35A4.

It is found in the golgi apparatus membrane. It catalyses the reaction UMP(out) + UDP-alpha-D-glucuronate(in) = UMP(in) + UDP-alpha-D-glucuronate(out). The enzyme catalyses UMP(out) + UDP-N-acetyl-alpha-D-glucosamine(in) = UMP(in) + UDP-N-acetyl-alpha-D-glucosamine(out). The catalysed reaction is UDP-N-acetyl-alpha-D-galactosamine(in) + UMP(out) = UDP-N-acetyl-alpha-D-galactosamine(out) + UMP(in). Probable UDP-sugar:UMP transmembrane antiporter involved in UDP-alpha-D-glucuronate/UDP-GlcA, UDP-GlcNAc/UDP-N-acetyl-alpha-D-glucosamine and UDP-N-acetyl-alpha-D-galactosamine/UDP-GalNAc transport from the cytosol to the lumen of the Golgi. This is UDP-sugar transporter protein SLC35A5 from Mus musculus (Mouse).